The primary structure comprises 308 residues: GTPase Era (308 aa).

The 171-residue stretch at 9–179 folds into the Era-type G domain; it reads RAGFVALIGE…RAWLGASLPE (171 aa). Residues 17 to 24 are G1; sequence GEPNAGKS. 17–24 contributes to the GTP binding site; it reads GEPNAGKS. Residues 43–47 are G2; sequence QTTRA. Residues 64 to 67 form a G3 region; it reads DTPG. Residues 64 to 68 and 129 to 132 contribute to the GTP site; these read DTPGL and NKID. The interval 129–132 is G4; it reads NKID. A G5 region spans residues 158 to 160; it reads ISA. The KH type-2 domain occupies 210–287; sequence LHQELPYQLT…HLFLQVKVRP (78 aa).

The protein belongs to the TRAFAC class TrmE-Era-EngA-EngB-Septin-like GTPase superfamily. Era GTPase family. As to quaternary structure, monomer.

Its subcellular location is the cytoplasm. The protein localises to the cell inner membrane. In terms of biological role, an essential GTPase that binds both GDP and GTP, with rapid nucleotide exchange. Plays a role in 16S rRNA processing and 30S ribosomal subunit biogenesis and possibly also in cell cycle regulation and energy metabolism. The sequence is that of GTPase Era from Dinoroseobacter shibae (strain DSM 16493 / NCIMB 14021 / DFL 12).